Consider the following 305-residue polypeptide: Tyrosine recombinase XerC (305 aa).

The Core-binding (CB) domain maps to threonine 4 to glutamate 95. The region spanning leucine 116–threonine 298 is the Tyr recombinase domain. Catalysis depends on residues arginine 159, lysine 182, histidine 250, arginine 253, and histidine 276. Tyrosine 285 serves as the catalytic O-(3'-phospho-DNA)-tyrosine intermediate.

Belongs to the 'phage' integrase family. XerC subfamily. In terms of assembly, forms a cyclic heterotetrameric complex composed of two molecules of XerC and two molecules of XerD.

Its subcellular location is the cytoplasm. Its function is as follows. Site-specific tyrosine recombinase, which acts by catalyzing the cutting and rejoining of the recombining DNA molecules. The XerC-XerD complex is essential to convert dimers of the bacterial chromosome into monomers to permit their segregation at cell division. It also contributes to the segregational stability of plasmids. This is Tyrosine recombinase XerC from Rickettsia peacockii (strain Rustic).